A 58-amino-acid chain; its full sequence is UPF0391 membrane protein Patl_4137 (58 aa).

2 helical membrane-spanning segments follow: residues 4–24 (WALT…GGIA) and 27–47 (AAGI…LSLV).

This sequence belongs to the UPF0391 family.

The protein localises to the cell membrane. This Pseudoalteromonas atlantica (strain T6c / ATCC BAA-1087) protein is UPF0391 membrane protein Patl_4137.